We begin with the raw amino-acid sequence, 110 residues long: ATP synthase epsilon chain (110 aa).

Belongs to the ATPase epsilon chain family. F-type ATPases have 2 components, CF(1) - the catalytic core - and CF(0) - the membrane proton channel. CF(1) has five subunits: alpha(3), beta(3), gamma(1), delta(1), epsilon(1). CF(0) has three main subunits: a, b and c.

Its subcellular location is the cell inner membrane. Functionally, produces ATP from ADP in the presence of a proton gradient across the membrane. This chain is ATP synthase epsilon chain, found in Rickettsia typhi (strain ATCC VR-144 / Wilmington).